Consider the following 207-residue polypeptide: B2 protein (207 aa).

The disordered stretch occupies residues 1-68; it reads MIDQEESNFN…FKTLPPAESL (68 aa). 2 stretches are compositionally biased toward low complexity: residues 8–26 and 35–52; these read NFNFNFNQPQQPQQQQFHG and KNNNNNSESGNKNGGENK. The 133-residue stretch at 72–204 folds into the DCD domain; sequence ETVGGYIFVC…AISLLDIFEE (133 aa).

This is B2 protein from Daucus carota (Wild carrot).